Reading from the N-terminus, the 787-residue chain is Endonuclease MutS2 (787 aa).

331-338 (GPNTGGKT) contacts ATP. The region spanning 711–786 (IDVRGKTSDD…EQGVTVVELK (76 aa)) is the Smr domain.

The protein belongs to the DNA mismatch repair MutS family. MutS2 subfamily. As to quaternary structure, homodimer. Binds to stalled ribosomes, contacting rRNA.

Functionally, endonuclease that is involved in the suppression of homologous recombination and thus may have a key role in the control of bacterial genetic diversity. In terms of biological role, acts as a ribosome collision sensor, splitting the ribosome into its 2 subunits. Detects stalled/collided 70S ribosomes which it binds and splits by an ATP-hydrolysis driven conformational change. Acts upstream of the ribosome quality control system (RQC), a ribosome-associated complex that mediates the extraction of incompletely synthesized nascent chains from stalled ribosomes and their subsequent degradation. Probably generates substrates for RQC. In Caldicellulosiruptor bescii (strain ATCC BAA-1888 / DSM 6725 / KCTC 15123 / Z-1320) (Anaerocellum thermophilum), this protein is Endonuclease MutS2.